A 238-amino-acid chain; its full sequence is Envelope glycoprotein G (238 aa).

The first 24 residues, 1–24, serve as a signal peptide directing secretion; sequence MSQGAMRAVVPIIPFLLVLVGVSG. Residues 25-189 are Virion surface-facing; that stretch reads VPTNVSSTTQ…SFLTASPALD (165 aa). N-linked (GlcNAc...) asparagine; by host glycosylation is found at Asn-28 and Asn-49. 2 stretches are compositionally biased toward polar residues: residues 28–42 and 49–68; these read NVSS…TTGR and NMTQ…TTPD. The tract at residues 28–171 is disordered; sequence NVSSTTQPQL…LTSKGRPLVP (144 aa). The span at 78–88 shows a compositional bias: acidic residues; sequence LEEEEEEEGAG. The segment covering 89-100 has biased composition (basic and acidic residues); that stretch reads DGEHLEGGDGTR. The helical transmembrane segment at 190-210 threads the bilayer; sequence TLFVVSTVIHTLSFLCIGAMA. Over 211 to 238 the chain is Intravirion; it reads THLCGGWSRRGRRTHPSVRYVCLPSERG.

It belongs to the alphaherpesvirinae glycoprotein G family.

It is found in the virion membrane. Chemokine-binding protein that inhibits neutrophils' chemotaxis. In Human herpesvirus 1 (strain 17) (HHV-1), this protein is Envelope glycoprotein G (gG).